The following is a 205-amino-acid chain: Adenylate kinase (205 aa).

11–16 (GSGKGT) contacts ATP. Residues 31 to 60 (STGDIFRHNVKSMTPLGVEAKRYIDNGDFV) are NMP. Residues threonine 32, arginine 37, 58-60 (DFV), 86-89 (GYPR), and glutamine 93 contribute to the AMP site. Residues 127-137 (KRAEIEGRADD) are LID. Arginine 128 contributes to the ATP binding site. AMP is bound by residues arginine 134 and arginine 145. ATP is bound at residue glycine 173.

This sequence belongs to the adenylate kinase family. As to quaternary structure, monomer.

It localises to the cytoplasm. The enzyme catalyses AMP + ATP = 2 ADP. The protein operates within purine metabolism; AMP biosynthesis via salvage pathway; AMP from ADP: step 1/1. Functionally, catalyzes the reversible transfer of the terminal phosphate group between ATP and AMP. Plays an important role in cellular energy homeostasis and in adenine nucleotide metabolism. The protein is Adenylate kinase of Micrococcus luteus (strain ATCC 4698 / DSM 20030 / JCM 1464 / CCM 169 / CCUG 5858 / IAM 1056 / NBRC 3333 / NCIMB 9278 / NCTC 2665 / VKM Ac-2230) (Micrococcus lysodeikticus).